The sequence spans 372 residues: Ligninase H2 (372 aa).

Positions 1–21 are cleaved as a signal peptide; the sequence is MAFKQLLAALSVALTLQVTQA. Residues 22 to 28 constitute a propeptide that is removed on maturation; sequence APNLDKR. Intrachain disulfides connect C31–C44, C43–C314, C63–C149, and C278–C344. The Proton acceptor role is filled by H76. D77, G95, D97, and S99 together coordinate Ca(2+). H205 contacts heme b. The Ca(2+) site is built by S206, D223, T225, Q228, and D230. Residue N286 is glycosylated (N-linked (GlcNAc...) asparagine).

Belongs to the peroxidase family. Ligninase subfamily. It depends on heme b as a cofactor. Ca(2+) is required as a cofactor.

The catalysed reaction is 1-(3,4-dimethoxyphenyl)-2-(2-methoxyphenoxy)propane-1,3-diol + H2O2 = 3,4-dimethoxybenzaldehyde + guaiacol + glycolaldehyde + H2O. The enzyme catalyses 2 (3,4-dimethoxyphenyl)methanol + H2O2 = 2 (3,4-dimethoxyphenyl)methanol radical + 2 H2O. It participates in secondary metabolite metabolism; lignin degradation. Depolymerization of lignin. Catalyzes the C(alpha)-C(beta) cleavage of the propyl side chains of lignin. In Phanerodontia chrysosporium (White-rot fungus), this protein is Ligninase H2 (GLG4).